Here is a 583-residue protein sequence, read N- to C-terminus: MDINDDSNDDHLASYDIQLCIQESIEASQAIFHPKRLVQLSDQNRKLVEAIRQGRIFELQEYVQYKYALEEADEKGWFPLHEAVVQPIQQILETVLDASYKTLWEFKTCDGETPLTLAVKAGLVENVKTLLDKGVWPNTKNDKGETPLLIAIKRGSYDMVSALIKYNTSLDQPCVKRWSAMHEAAKQGRKDIITLLLNHRGNVHLRDGFGVTPLGVAAEYGHCDVLEHLIHKGGDVFALADDGASVLFEAAGGGNPDCISLLLKYGGSGNVPNRAGHLPIHRAAYEGHYLALKYLIPVTSKHAIQKSGLTPIHSAAEGQNAQCLELLIENGFDVNALLADHISQSYDDERKTALYFAVSNNDIHCTEVLLAAGADPNLDPLNCLLVAVRANRHEIVRLLLSYGANVNCYFMHVNDTRFPSAIQYALNDEIMLRLLLNNGYQVELCFDCMHGNIFGNSFVWSETEEEGLPGWTSCIIKDNPFCEFITVPWMKHLVGGIVRILIDYMDYVPLCAKLKSVLEVQREWPEIRQIIENPCSLKHLCRLKIRRVMGLQRLCQPASIQMLPLPAAMRRYLLFKEFDLYGQ.

11 ANK repeats span residues 75–104, 110–139, 143–172, 176–205, 209–238, 242–271, 275–304, 307–336, 349–378, 379–408, and 416–444; these read KGWFPLHEAVVQPIQQILETVLDASYKTLW, DGETPLTLAVKAGLVENVKTLLDKGVWPNT, KGETPLLIAIKRGSYDMVSALIKYNTSLDQ, KRWSAMHEAAKQGRKDIITLLLNHRGNVHL, FGVTPLGVAAEYGHCDVLEHLIHKGGDVFA, DGASVLFEAAGGGNPDCISLLLKYGGSGNV, AGHLPIHRAAYEGHYLALKYLIPVTSKHAI, SGLTPIHSAAEGQNAQCLELLIENGFDVNA, ERKTALYFAVSNNDIHCTEVLLAAGADPNL, DPLNCLLVAVRANRHEIVRLLLSYGANVNC, and TRFPSAIQYALNDEIMLRLLLNNGYQVEL. The SOCS box domain maps to 524–579; sequence WPEIRQIIENPCSLKHLCRLKIRRVMGLQRLCQPASIQMLPLPAAMRRYLLFKEFD.

It belongs to the ankyrin SOCS box (ASB) family.

It functions in the pathway protein modification; protein ubiquitination. In terms of biological role, may be a substrate-recognition component of a SCF-like ECS (Elongin-Cullin-SOCS-box protein) E3 ubiquitin-protein ligase complex which mediates the ubiquitination and subsequent proteasomal degradation of target proteins. In Mus musculus (Mouse), this protein is Ankyrin repeat and SOCS box protein 15 (Asb15).